A 284-amino-acid chain; its full sequence is Hemin import ATP-binding protein HmuV (284 aa).

An ABC transporter domain is found at leucine 33 to glutamate 266. Glycine 65–serine 72 contributes to the ATP binding site.

The protein belongs to the ABC transporter superfamily. Heme (hemin) importer (TC 3.A.1.14.5) family. In terms of assembly, the complex is composed of two ATP-binding proteins (HmuV), two transmembrane proteins (HmuU) and a solute-binding protein (HmuT).

Its subcellular location is the cell membrane. In terms of biological role, part of the ABC transporter complex HmuTUV involved in hemin import. Responsible for energy coupling to the transport system. The chain is Hemin import ATP-binding protein HmuV from Thermobifida fusca (strain YX).